A 139-amino-acid chain; its full sequence is Transcription antitermination protein NusB (139 aa).

Belongs to the NusB family.

In terms of biological role, involved in transcription antitermination. Required for transcription of ribosomal RNA (rRNA) genes. Binds specifically to the boxA antiterminator sequence of the ribosomal RNA (rrn) operons. The polypeptide is Transcription antitermination protein NusB (Salmonella agona (strain SL483)).